A 312-amino-acid polypeptide reads, in one-letter code: Ribosomal protein L11 methyltransferase (312 aa).

S-adenosyl-L-methionine contacts are provided by Thr-162, Gly-183, Asp-205, and Asn-248.

The protein belongs to the methyltransferase superfamily. PrmA family.

Its subcellular location is the cytoplasm. It carries out the reaction L-lysyl-[protein] + 3 S-adenosyl-L-methionine = N(6),N(6),N(6)-trimethyl-L-lysyl-[protein] + 3 S-adenosyl-L-homocysteine + 3 H(+). In terms of biological role, methylates ribosomal protein L11. In Bacillus cereus (strain G9842), this protein is Ribosomal protein L11 methyltransferase.